Reading from the N-terminus, the 238-residue chain is MATLGVNIDHIANVRQARKTVEPDPVQFAFLAELGGADSITVHLREDRRHIQDRDLFLLKETIKTKLNLEMAATEEMLEIAKKILPDYVTLVPEKREEVTTEGGLDLKSNVQYLKKAVGNLQDSNIEVSAFIDPLGEQINYSKEIGFDFIELHTGKYAKLSGSDQYKELQRIIESTYLANDLGLVVNAGHGLNYNNVKKIASINNMNELNIGHSIVARALAIGLEKSVREMKSLITSN.

Position 7 (N7) interacts with 3-amino-2-oxopropyl phosphate. 9–10 (DH) is a 1-deoxy-D-xylulose 5-phosphate binding site. A 3-amino-2-oxopropyl phosphate-binding site is contributed by R18. H43 functions as the Proton acceptor in the catalytic mechanism. Positions 45 and 50 each coordinate 1-deoxy-D-xylulose 5-phosphate. E70 (proton acceptor) is an active-site residue. Residue T100 participates in 1-deoxy-D-xylulose 5-phosphate binding. Residue H190 is the Proton donor of the active site. Residues G191 and 212 to 213 (GH) contribute to the 3-amino-2-oxopropyl phosphate site.

It belongs to the PNP synthase family. In terms of assembly, homooctamer; tetramer of dimers.

It is found in the cytoplasm. It catalyses the reaction 3-amino-2-oxopropyl phosphate + 1-deoxy-D-xylulose 5-phosphate = pyridoxine 5'-phosphate + phosphate + 2 H2O + H(+). Its pathway is cofactor biosynthesis; pyridoxine 5'-phosphate biosynthesis; pyridoxine 5'-phosphate from D-erythrose 4-phosphate: step 5/5. In terms of biological role, catalyzes the complicated ring closure reaction between the two acyclic compounds 1-deoxy-D-xylulose-5-phosphate (DXP) and 3-amino-2-oxopropyl phosphate (1-amino-acetone-3-phosphate or AAP) to form pyridoxine 5'-phosphate (PNP) and inorganic phosphate. This chain is Pyridoxine 5'-phosphate synthase, found in Prochlorococcus marinus (strain MIT 9215).